A 216-amino-acid polypeptide reads, in one-letter code: Protein-L-isoaspartate O-methyltransferase (216 aa).

The active site involves serine 66.

It belongs to the methyltransferase superfamily. L-isoaspartyl/D-aspartyl protein methyltransferase family.

It is found in the cytoplasm. It carries out the reaction [protein]-L-isoaspartate + S-adenosyl-L-methionine = [protein]-L-isoaspartate alpha-methyl ester + S-adenosyl-L-homocysteine. Functionally, catalyzes the methyl esterification of L-isoaspartyl residues in peptides and proteins that result from spontaneous decomposition of normal L-aspartyl and L-asparaginyl residues. It plays a role in the repair and/or degradation of damaged proteins. In Dechloromonas aromatica (strain RCB), this protein is Protein-L-isoaspartate O-methyltransferase.